We begin with the raw amino-acid sequence, 323 residues long: Glucokinase (323 aa).

8–13 (GDVGGT) serves as a coordination point for ATP.

This sequence belongs to the bacterial glucokinase family.

It localises to the cytoplasm. The enzyme catalyses D-glucose + ATP = D-glucose 6-phosphate + ADP + H(+). The protein is Glucokinase of Yersinia pseudotuberculosis serotype I (strain IP32953).